We begin with the raw amino-acid sequence, 639 residues long: MRPNLFSGASRLLTYSRNGKLLTRGRSTKATSSSLDSQHQDAATTEGGRAESVEESPEQQRKLPTREPLAKNFFIGVVDKELLAYPEVIPRDEMAQLENSLLPLKNYFVEPRETEETSPETLRQLGLYGLNVSTDYEGKGYGWSASLMASEPDSTDINVTLGLQTHRVVVDLLKEVGTPLQQQRYLQDLATGKLIGTEAIYEISPPEEDYFNTTAELFPEYGKWQLNGEKSFVICTPGERQLFLVLAQTQQPNVPGVLGRGTTIFLVDSQQEGVRLGEKHATFGCRKAEIRRVHFEGVKLGEDQVVGLPHDGNRYSEQLVRSSRLRGSLVGLSLAKKLLNELAQYTVNTTQCGVQLQDLELTRIHMSRAMCSVYAMESMLYLTAGLLDEFRAQDVTLESAITKYFTLRQVYAIASQNLGVVGPKSLLSGETTELGLRDAAQLCTQGESLDTLGMFIALTGLQHAGQAMNTGVRKSRNPLFNPGHIFGKFLDNNSIDNPKTKMQLSEHVHPSLEAAAQCIELSVARLQMAVELMFTKHGNAVVERQSEMQRLAEVGTLIYAMWASVARASRSYCIGLPLADHELLTATAICSEGRDRVRTLCTEIYGGHFVNNDNNLVRLSKQVAKSKGYFAVHPLTFNF.

The transit peptide at 1–26 (MRPNLFSGASRLLTYSRNGKLLTRGR) directs the protein to the mitochondrion. The interval 23 to 65 (TRGRSTKATSSSLDSQHQDAATTEGGRAESVEESPEQQRKLPT) is disordered. A compositionally biased stretch (polar residues) spans 28 to 43 (TKATSSSLDSQHQDAA). Over residues 48-65 (GRAESVEESPEQQRKLPT) the composition is skewed to basic and acidic residues.

Belongs to the acyl-CoA dehydrogenase family. As to quaternary structure, associates with mitochondrial complex I assembly intermediates during its biogenesis. It depends on FAD as a cofactor.

The protein localises to the mitochondrion. As part of the MCIA complex, primarily participates in the assembly of the mitochondrial complex I and therefore plays a role in oxidative phosphorylation. This is Complex I assembly factor Egm, mitochondrial from Drosophila melanogaster (Fruit fly).